The chain runs to 178 residues: Large ribosomal subunit protein uL6 (178 aa).

Belongs to the universal ribosomal protein uL6 family. As to quaternary structure, part of the 50S ribosomal subunit.

This protein binds to the 23S rRNA, and is important in its secondary structure. It is located near the subunit interface in the base of the L7/L12 stalk, and near the tRNA binding site of the peptidyltransferase center. This is Large ribosomal subunit protein uL6 from Thermoplasma volcanium (strain ATCC 51530 / DSM 4299 / JCM 9571 / NBRC 15438 / GSS1).